The primary structure comprises 377 residues: Chaperone protein DnaJ (377 aa).

The J domain maps to 5–69; it reads DYYEVLGVSK…NKRANYDQFG (65 aa). The CR-type zinc finger occupies 134–216; sequence GTEKEISIRK…CHGKGTETKN (83 aa). Residues Cys-147, Cys-150, Cys-164, Cys-167, Cys-190, Cys-193, Cys-204, and Cys-207 each contribute to the Zn(2+) site. 4 CXXCXGXG motif repeats span residues 147-154, 164-171, 190-197, and 204-211; these read CETCDGSG, CHYCNGSG, CPVCNGTG, and CPTCHGKG.

This sequence belongs to the DnaJ family. In terms of assembly, homodimer. Zn(2+) serves as cofactor.

Its subcellular location is the cytoplasm. Its function is as follows. Participates actively in the response to hyperosmotic and heat shock by preventing the aggregation of stress-denatured proteins and by disaggregating proteins, also in an autonomous, DnaK-independent fashion. Unfolded proteins bind initially to DnaJ; upon interaction with the DnaJ-bound protein, DnaK hydrolyzes its bound ATP, resulting in the formation of a stable complex. GrpE releases ADP from DnaK; ATP binding to DnaK triggers the release of the substrate protein, thus completing the reaction cycle. Several rounds of ATP-dependent interactions between DnaJ, DnaK and GrpE are required for fully efficient folding. Also involved, together with DnaK and GrpE, in the DNA replication of plasmids through activation of initiation proteins. This Staphylococcus carnosus (strain TM300) protein is Chaperone protein DnaJ.